We begin with the raw amino-acid sequence, 197 residues long: Recombination protein RecR (197 aa).

The segment at 56–71 adopts a C4-type zinc-finger fold; sequence CQQCRNLSETEICGFC. Positions 79–174 constitute a Toprim domain; sequence DQLCIVETPT…SVTRLAQGIP (96 aa).

It belongs to the RecR family.

In terms of biological role, may play a role in DNA repair. It seems to be involved in an RecBC-independent recombinational process of DNA repair. It may act with RecF and RecO. This chain is Recombination protein RecR, found in Hydrogenovibrio crunogenus (strain DSM 25203 / XCL-2) (Thiomicrospira crunogena).